Consider the following 815-residue polypeptide: MKFTLSWLKQFLEISASVTEIAEALTDIGLEVEEVIDKATELQKFEVAYIRNIKPHPSADKLKLCDVETKNGILQIVCGASNVRADIKVVLANIGIEIPKGNFKIKESIIRGEKSYGMLCSEEELLLSSDSNGIIELPEYAVVGDNFTRYYGLDDPIFVINVTPNRGDVLGVYGIARDLSAKGLGTLKKLELPEIKSTFFSKIKLNVHDKAACPLFTFREIRNLKNKPSPSWLQQLLKNVGIKTISSLVDITNYIAYSFGQPIHVYDADRIYGALSVGRDCNCKVISYKNHEIATAVLKSSNDTANFYAINGKEYLLTENDLTIKDESGIQGLAGIICGAKSSCNDSTINVILEAACFNARLVAASGRRLKIDTESRYRNERNIDRNFTEKALDIATNLILSICGNCEVSEVVKVGEQELQKIPLDFSVYFLEKITGIKLSIKEIEVILNKLGFITDVKGDIIKVIAPSWRHDINILEDIAEEIVRIYGYDKIESIKLPELHQDNNNLREYKRISSFKRILASQGYDEVVTNSFMSSEDAKLFAELKEELFLLNPMSIDENYMRPTVLPNLISIVSKNLARAIKDMAFFEVGPSFINLNTELTYLTAIISGSFNNKNPHSLGRSYDIFDIKGALEQVIEYAGLSLDKCIVANETVLPQYYHPTRAINIRLGKNLLGHFGQIHPKILKYYDINQEIFAFELNITNLPLIKAKFGKRNELKVSDFQANFRDYSFIVNQDHRVGEIISYINNFNKNLVKSVMLFDIYSGDKLPEGKKSISIKIELQADDRTLSETDLNAFSQDLVESISQKFQGTLRE.

The tRNA-binding domain maps to 39 to 148 (ATELQKFEVA…EYAVVGDNFT (110 aa)). The B5 domain occupies 420-495 (LQKIPLDFSV…RIYGYDKIES (76 aa)). Residues aspartate 473, aspartate 479, glutamate 482, and glutamate 483 each coordinate Mg(2+). The 94-residue stretch at 721–814 (SDFQANFRDY…ISQKFQGTLR (94 aa)) folds into the FDX-ACB domain.

It belongs to the phenylalanyl-tRNA synthetase beta subunit family. Type 1 subfamily. As to quaternary structure, tetramer of two alpha and two beta subunits. Mg(2+) serves as cofactor.

The protein resides in the cytoplasm. The enzyme catalyses tRNA(Phe) + L-phenylalanine + ATP = L-phenylalanyl-tRNA(Phe) + AMP + diphosphate + H(+). The chain is Phenylalanine--tRNA ligase beta subunit from Rickettsia typhi (strain ATCC VR-144 / Wilmington).